Consider the following 341-residue polypeptide: Aspartate--ammonia ligase (341 aa).

It belongs to the class-II aminoacyl-tRNA synthetase family. AsnA subfamily.

It is found in the cytoplasm. It carries out the reaction L-aspartate + NH4(+) + ATP = L-asparagine + AMP + diphosphate + H(+). It functions in the pathway amino-acid biosynthesis; L-asparagine biosynthesis; L-asparagine from L-aspartate (ammonia route): step 1/1. The polypeptide is Aspartate--ammonia ligase (Clostridium tetani (strain Massachusetts / E88)).